Consider the following 148-residue polypeptide: Endoribonuclease YbeY (148 aa).

Zn(2+)-binding residues include histidine 112, histidine 116, and histidine 122.

It belongs to the endoribonuclease YbeY family. It depends on Zn(2+) as a cofactor.

It is found in the cytoplasm. Its function is as follows. Single strand-specific metallo-endoribonuclease involved in late-stage 70S ribosome quality control and in maturation of the 3' terminus of the 16S rRNA. This Albidiferax ferrireducens (strain ATCC BAA-621 / DSM 15236 / T118) (Rhodoferax ferrireducens) protein is Endoribonuclease YbeY.